We begin with the raw amino-acid sequence, 389 residues long: Chorismate synthase (389 aa).

The NADP(+) site is built by Arg-40 and Arg-46. Residues 130 to 132 (RAS), 251 to 252 (QA), Gly-297, 312 to 316 (KPIST), and Arg-338 contribute to the FMN site.

Belongs to the chorismate synthase family. As to quaternary structure, homotetramer. Requires FMNH2 as cofactor.

It catalyses the reaction 5-O-(1-carboxyvinyl)-3-phosphoshikimate = chorismate + phosphate. It participates in metabolic intermediate biosynthesis; chorismate biosynthesis; chorismate from D-erythrose 4-phosphate and phosphoenolpyruvate: step 7/7. Functionally, catalyzes the anti-1,4-elimination of the C-3 phosphate and the C-6 proR hydrogen from 5-enolpyruvylshikimate-3-phosphate (EPSP) to yield chorismate, which is the branch point compound that serves as the starting substrate for the three terminal pathways of aromatic amino acid biosynthesis. This reaction introduces a second double bond into the aromatic ring system. The protein is Chorismate synthase of Solibacter usitatus (strain Ellin6076).